Reading from the N-terminus, the 117-residue chain is Immunoglobulin kappa variable 1D-43 (117 aa).

An N-terminal signal peptide occupies residues 1-22 (MDMRVPAQRLGLLLLWFPGARC). The interval 23-45 (AIRMTQSPFSLSASVGDRVTITC) is framework-1. One can recognise an Ig-like domain in the interval 23–117 (AIRMTQSPFS…YYCQQYYSTP (95 aa)). A disulfide bridge links Cys45 with Cys110. A complementarity-determining-1 region spans residues 46 to 56 (WASQGISSYLA). The segment at 57 to 71 (WYQQKPAKAPKLFIY) is framework-2. The segment at 72–78 (YASSLQS) is complementarity-determining-2. Residues 79–110 (GVPSRFSGSGSGTDYTLTISSLQPEDFATYYC) are framework-3. The interval 111–117 (QQYYSTP) is complementarity-determining-3.

In terms of assembly, immunoglobulins are composed of two identical heavy chains and two identical light chains; disulfide-linked.

It localises to the secreted. Its subcellular location is the cell membrane. V region of the variable domain of immunoglobulin light chains that participates in the antigen recognition. Immunoglobulins, also known as antibodies, are membrane-bound or secreted glycoproteins produced by B lymphocytes. In the recognition phase of humoral immunity, the membrane-bound immunoglobulins serve as receptors which, upon binding of a specific antigen, trigger the clonal expansion and differentiation of B lymphocytes into immunoglobulins-secreting plasma cells. Secreted immunoglobulins mediate the effector phase of humoral immunity, which results in the elimination of bound antigens. The antigen binding site is formed by the variable domain of one heavy chain, together with that of its associated light chain. Thus, each immunoglobulin has two antigen binding sites with remarkable affinity for a particular antigen. The variable domains are assembled by a process called V-(D)-J rearrangement and can then be subjected to somatic hypermutations which, after exposure to antigen and selection, allow affinity maturation for a particular antigen. The chain is Immunoglobulin kappa variable 1D-43 from Homo sapiens (Human).